Consider the following 864-residue polypeptide: Mitochondrial 15S rRNA processing factor CCM1 (864 aa).

The N-terminal 76 residues, Met1–Arg76, are a transit peptide targeting the mitochondrion. 2 PPR repeats span residues Asn319–His353 and Asp356–Pro390.

It belongs to the CCM1 family. Binds to mitochondrial small subunit 15S rRNA.

The protein localises to the mitochondrion. In terms of biological role, regulates mitochondrial small subunit maturation by controlling 15S rRNA 5'-end processing. Localizes to the 5' precursor of the 15S rRNA in a position that is subsequently occupied by mS47 in the mature yeast mtSSU. Uses structure and sequence-specific RNA recognition, binding to a single-stranded region of the precursor and specifically recognizing bases -6 to -1. The exchange of Ccm1 for mS47 is coupled to the irreversible removal of precursor rRNA that is accompanied by conformational changes of the mitoribosomal proteins uS5m and mS26. These conformational changes signal completion of 5'-end rRNA processing through protection of the mature 5'-end of the 15S rRNA and stabilization of mS47. The removal of the 5' precursor together with the dissociation of Ccm1 may be catalyzed by the 5'-3' exoribonuclease Pet127. Involved in the specific removal of group I introns in mitochondrial encoded transcripts. This Saccharomyces cerevisiae (strain YJM789) (Baker's yeast) protein is Mitochondrial 15S rRNA processing factor CCM1 (CCM1).